Consider the following 1131-residue polypeptide: RNA2 polyprotein (1131 aa).

The interval 213 to 236 (ALRTHPGGPALPPLPPPPPIQKPP) is disordered. Residues 221-234 (PALPPLPPPPPIQK) are compositionally biased toward pro residues.

Belongs to the nepoviruses RNA2 polyprotein family. Specific enzymatic cleavages in vivo by the P1 encoded 3C-like protease yield mature proteins.

It localises to the host cell junction. It is found in the host plasmodesma. The protein localises to the virion. Functionally, implicated in RNA2 replication. Could also be required for nematode transmission of the virus. In terms of biological role, transports viral genome to neighboring plant cells directly through plasmosdesmata, without any budding. The movement protein allows efficient cell to cell propagation, by bypassing the host cell wall barrier. Acts by forming a tubular structure at the host plasmodesmata, enlarging it enough to allow free passage of virion capsids. This Vitis vinifera (Grape) protein is RNA2 polyprotein.